The sequence spans 156 residues: MSWSKVKYFFFDTPEEKEAAQYSYEKEQTDMKKQQDPPEQQDVTFPKAQPKQNVVSIETAKQSSKVVLLEPRTYSEAQGIADHLKGRRAVVINLQRMSTDQAVRIVDFLSGTVYAIGGDIQKIGPKTFMCTPENVDIVGAISELFGEEDDTNIKRW.

The segment covering 23 to 36 (SYEKEQTDMKKQQD) has biased composition (basic and acidic residues). The disordered stretch occupies residues 23-49 (SYEKEQTDMKKQQDPPEQQDVTFPKAQ).

It belongs to the SepF family. Homodimer. Interacts with FtsZ.

The protein resides in the cytoplasm. In terms of biological role, cell division protein that is part of the divisome complex and is recruited early to the Z-ring. Probably stimulates Z-ring formation, perhaps through the cross-linking of FtsZ protofilaments. Its function overlaps with FtsA. This chain is Cell division protein SepF, found in Bacillus anthracis (strain CDC 684 / NRRL 3495).